We begin with the raw amino-acid sequence, 413 residues long: Exodeoxyribonuclease 7 large subunit (413 aa).

Belongs to the XseA family. In terms of assembly, heterooligomer composed of large and small subunits.

Its subcellular location is the cytoplasm. It carries out the reaction Exonucleolytic cleavage in either 5'- to 3'- or 3'- to 5'-direction to yield nucleoside 5'-phosphates.. In terms of biological role, bidirectionally degrades single-stranded DNA into large acid-insoluble oligonucleotides, which are then degraded further into small acid-soluble oligonucleotides. This Corynebacterium efficiens (strain DSM 44549 / YS-314 / AJ 12310 / JCM 11189 / NBRC 100395) protein is Exodeoxyribonuclease 7 large subunit.